Here is a 480-residue protein sequence, read N- to C-terminus: Zinc metalloproteinase/disintegrin (480 aa).

The first 20 residues, 1–20, serve as a signal peptide directing secretion; the sequence is MIQVLLITICLAVFPFQGSS. The propeptide occupies 21-190; the sequence is IVLDSGNLNE…KASQLNVSPD (170 aa). The Peptidase M12B domain occupies 197 to 391; it reads RFIKLAIYVD…HSPQCILNDP (195 aa). 2 N-linked (GlcNAc...) asparagine glycosylation sites follow: asparagine 259 and asparagine 279. Cystine bridges form between cysteine 308–cysteine 386, cysteine 348–cysteine 370, cysteine 350–cysteine 353, cysteine 413–cysteine 428, cysteine 415–cysteine 423, cysteine 422–cysteine 445, cysteine 436–cysteine 442, cysteine 441–cysteine 466, and cysteine 454–cysteine 473. Residue histidine 333 participates in Zn(2+) binding. Glutamate 334 is a catalytic residue. Zn(2+) is bound by residues histidine 337 and histidine 343. A Disintegrin domain is found at 399–480; the sequence is TPVSGNELLE…AGCPRNPFHA (82 aa). The Cell attachment site motif lies at 458–460; the sequence is RGD.

It belongs to the venom metalloproteinase (M12B) family. P-II subfamily. P-IIa sub-subfamily. As to quaternary structure, monomer. Requires Zn(2+) as cofactor. In terms of tissue distribution, expressed by the venom gland.

It is found in the secreted. In terms of biological role, impairs hemostasis in the envenomed animal. Functionally, inhibits platelet aggregation and bone resorption. The polypeptide is Zinc metalloproteinase/disintegrin (Gloydius halys (Chinese water mocassin)).